The primary structure comprises 212 residues: Putative aryl-alcohol dehydrogenase AAD6 (212 aa).

The Proton donor role is filled by tyrosine 76.

Belongs to the aldo/keto reductase family. Aldo/keto reductase 2 subfamily.

In Saccharomyces cerevisiae (strain ATCC 204508 / S288c) (Baker's yeast), this protein is Putative aryl-alcohol dehydrogenase AAD6.